Consider the following 125-residue polypeptide: Small ribosomal subunit protein uS11 (125 aa).

This sequence belongs to the universal ribosomal protein uS11 family. Part of the 30S ribosomal subunit. Interacts with proteins S7 and S18. Binds to IF-3.

In terms of biological role, located on the platform of the 30S subunit, it bridges several disparate RNA helices of the 16S rRNA. Forms part of the Shine-Dalgarno cleft in the 70S ribosome. This chain is Small ribosomal subunit protein uS11, found in Aquifex aeolicus (strain VF5).